The following is a 505-amino-acid chain: Ribose import ATP-binding protein RbsA (505 aa).

ABC transporter domains are found at residues 12-249 (LQMK…VGRK) and 259-504 (VKKG…VAFS). 44–51 (GENGAGKS) is a binding site for ATP.

It belongs to the ABC transporter superfamily. Ribose importer (TC 3.A.1.2.1) family. In terms of assembly, the complex is composed of an ATP-binding protein (RbsA), two transmembrane proteins (RbsC) and a solute-binding protein (RbsB).

The protein resides in the cell membrane. It carries out the reaction D-ribose(out) + ATP + H2O = D-ribose(in) + ADP + phosphate + H(+). Its function is as follows. Part of the ABC transporter complex RbsABC involved in ribose import. Responsible for energy coupling to the transport system. This is Ribose import ATP-binding protein RbsA from Clostridium tetani (strain Massachusetts / E88).